The sequence spans 640 residues: Threonine--tRNA ligase (640 aa).

Residues 1–61 (MPIITLPDGS…ERDATLQIIT (61 aa)) enclose the TGS domain. The tract at residues 242–533 (DHRRIGKQLD…LIEHYAGAFP (292 aa)) is catalytic. 3 residues coordinate Zn(2+): cysteine 333, histidine 384, and histidine 510.

The protein belongs to the class-II aminoacyl-tRNA synthetase family. As to quaternary structure, homodimer. Zn(2+) serves as cofactor.

It is found in the cytoplasm. It carries out the reaction tRNA(Thr) + L-threonine + ATP = L-threonyl-tRNA(Thr) + AMP + diphosphate + H(+). In terms of biological role, catalyzes the attachment of threonine to tRNA(Thr) in a two-step reaction: L-threonine is first activated by ATP to form Thr-AMP and then transferred to the acceptor end of tRNA(Thr). Also edits incorrectly charged L-seryl-tRNA(Thr). The protein is Threonine--tRNA ligase of Pseudomonas paraeruginosa (strain DSM 24068 / PA7) (Pseudomonas aeruginosa (strain PA7)).